The primary structure comprises 110 residues: Protein RALF-like 4 (110 aa).

A signal peptide spans Met-1–Ala-23. Residues Thr-24–Ala-58 constitute a propeptide, removed in mature form. 2 disulfides stabilise this stretch: Cys-76-Cys-86 and Cys-99-Cys-105.

This sequence belongs to the plant rapid alkalinization factor (RALF) family. Post-translationally, proteolytically cleaved, probably by S1P, a subtilisin-like serine protease (subtilase).

The protein localises to the secreted. Functionally, cell signaling peptide that may regulate plant stress, growth, and development. Mediates a rapid alkalinization of extracellular space by mediating a transient increase in the cytoplasmic Ca(2+) concentration leading to a calcium-dependent signaling events through a cell surface receptor and a concomitant activation of some intracellular mitogen-activated protein kinases. In Arabidopsis thaliana (Mouse-ear cress), this protein is Protein RALF-like 4 (RALFL4).